The following is a 238-amino-acid chain: E3 ubiquitin-protein ligase ZNRF2 (238 aa).

The segment at Met-1–Leu-137 is disordered. A lipid anchor (N-myristoyl glycine) is attached at Gly-2. Ser-20, Ser-24, Ser-75, Ser-82, Ser-107, Ser-110, Ser-141, Ser-147, and Ser-189 each carry phosphoserine. Low complexity predominate over residues Gly-35–Gly-77. Residues Cys-195–Pro-236 form an RING-type; atypical zinc finger.

As to quaternary structure, interacts with UBE2N. Interacts with ZNRF1. Interacts (when phosphorylated) with YWHAE. In terms of processing, phosphorylated; leading to binding to YWHAE. Phosphorylated by MTOR at Ser-147 and dephosphorylated by PP6C. Ser-147 phosphorylation stimulates vesicle-to-cytosol translocation. Expressed primarily in the nervous system. Expression is more intense in the granular cell layer of hippocampus, Purkinje cell layer of the cerebellum and the granular cell layer of the olfactory bulb. Detected in sensory neurons but not expressed in sympatic or enteric neurons. Expressed in testis, adipose tissue, columnar epithelial cells of the gut.

It is found in the endosome membrane. The protein resides in the lysosome membrane. Its subcellular location is the presynaptic cell membrane. It localises to the cytoplasm. It catalyses the reaction S-ubiquitinyl-[E2 ubiquitin-conjugating enzyme]-L-cysteine + [acceptor protein]-L-lysine = [E2 ubiquitin-conjugating enzyme]-L-cysteine + N(6)-ubiquitinyl-[acceptor protein]-L-lysine.. Its pathway is protein modification; protein ubiquitination. Functionally, E3 ubiquitin-protein ligase that plays a role in the establishment and maintenance of neuronal transmission and plasticity. Ubiquitinates the Na(+)/K(+) ATPase alpha-1 subunit/ATP1A1 and thereby influences its endocytosis and/or degradation. Also acts as a positive regulator of mTORC1 activation by amino acids, which functions upstream of the V-ATPase and of Rag-GTPases. In turn, phosphorylation by mTOR leads to its inhibition via targeting to the cytosol allowing a self-regulating feedback mechanism. This chain is E3 ubiquitin-protein ligase ZNRF2 (Znrf2), found in Mus musculus (Mouse).